Consider the following 502-residue polypeptide: ATP synthase subunit alpha (502 aa).

Position 169–176 (169–176) interacts with ATP; the sequence is GDRQTGKT.

It belongs to the ATPase alpha/beta chains family. In terms of assembly, F-type ATPases have 2 components, CF(1) - the catalytic core - and CF(0) - the membrane proton channel. CF(1) has five subunits: alpha(3), beta(3), gamma(1), delta(1), epsilon(1). CF(0) has three main subunits: a(1), b(2) and c(9-12). The alpha and beta chains form an alternating ring which encloses part of the gamma chain. CF(1) is attached to CF(0) by a central stalk formed by the gamma and epsilon chains, while a peripheral stalk is formed by the delta and b chains.

It localises to the cell inner membrane. It catalyses the reaction ATP + H2O + 4 H(+)(in) = ADP + phosphate + 5 H(+)(out). Functionally, produces ATP from ADP in the presence of a proton gradient across the membrane. The alpha chain is a regulatory subunit. This Geotalea uraniireducens (strain Rf4) (Geobacter uraniireducens) protein is ATP synthase subunit alpha.